The chain runs to 87 residues: Large ribosomal subunit protein bL31B (87 aa).

The protein belongs to the bacterial ribosomal protein bL31 family. Type B subfamily. As to quaternary structure, part of the 50S ribosomal subunit.

The protein is Large ribosomal subunit protein bL31B of Burkholderia ambifaria (strain MC40-6).